Consider the following 121-residue polypeptide: Darcynin homolog (121 aa).

This sequence belongs to the darcynin family.

The polypeptide is Darcynin homolog (Streptomyces avermitilis (strain ATCC 31267 / DSM 46492 / JCM 5070 / NBRC 14893 / NCIMB 12804 / NRRL 8165 / MA-4680)).